The following is a 245-amino-acid chain: Octanoyltransferase (245 aa).

Residues 54–238 form the BPL/LPL catalytic domain; sequence GEATELVWLL…AFENIFGETR (185 aa). Substrate is bound by residues 92-99, 167-169, and 180-182; these read RGGQLTYH, AIG, and GIA. The Acyl-thioester intermediate role is filled by Cys198.

Belongs to the LipB family.

Its subcellular location is the cytoplasm. The catalysed reaction is octanoyl-[ACP] + L-lysyl-[protein] = N(6)-octanoyl-L-lysyl-[protein] + holo-[ACP] + H(+). It participates in protein modification; protein lipoylation via endogenous pathway; protein N(6)-(lipoyl)lysine from octanoyl-[acyl-carrier-protein]: step 1/2. Catalyzes the transfer of endogenously produced octanoic acid from octanoyl-acyl-carrier-protein onto the lipoyl domains of lipoate-dependent enzymes. Lipoyl-ACP can also act as a substrate although octanoyl-ACP is likely to be the physiological substrate. The protein is Octanoyltransferase of Rhodopseudomonas palustris (strain TIE-1).